The primary structure comprises 53 residues: MPVLPGTQRYPHQRRRFQAAGGGAESGKRGSEEAPGVAWSGSESGRDAATPAW.

The disordered stretch occupies residues 1–53 (MPVLPGTQRYPHQRRRFQAAGGGAESGKRGSEEAPGVAWSGSESGRDAATPAW).

Interacts with HNRNPA1 (via the RGG-box). Interacts with IGF2BP2.

Its function is as follows. Blocks the binding of HNRNPA1 to the intronic sequences flanking exon 9 of the PKM gene by competitively binding to the HNRNPA1 RGG-box motif. This inhibits inclusion of exon 9 and promotes inclusion of exon 10, suppressing formation of the PKM M2 isoform and promoting production of the M1 isoform. Also suppresses HNRNPA1-mediated processing of microRNA 18a (miR-18a). Promotes MYC stability through interaction with IGF2BP2. This is HOXB-AS3 peptide from Homo sapiens (Human).